The primary structure comprises 97 residues: Large ribosomal subunit protein uL23 (97 aa).

Belongs to the universal ribosomal protein uL23 family. Part of the 50S ribosomal subunit. Contacts protein L29, and trigger factor when it is bound to the ribosome.

In terms of biological role, one of the early assembly proteins it binds 23S rRNA. One of the proteins that surrounds the polypeptide exit tunnel on the outside of the ribosome. Forms the main docking site for trigger factor binding to the ribosome. This is Large ribosomal subunit protein uL23 from Brucella melitensis biotype 2 (strain ATCC 23457).